We begin with the raw amino-acid sequence, 614 residues long: DNA mismatch repair protein MutL (614 aa).

The protein belongs to the DNA mismatch repair MutL/HexB family.

Its function is as follows. This protein is involved in the repair of mismatches in DNA. It is required for dam-dependent methyl-directed DNA mismatch repair. May act as a 'molecular matchmaker', a protein that promotes the formation of a stable complex between two or more DNA-binding proteins in an ATP-dependent manner without itself being part of a final effector complex. This Thermoanaerobacter sp. (strain X514) protein is DNA mismatch repair protein MutL.